The following is a 646-amino-acid chain: Long-chain fatty acid transport protein 1 (646 aa).

Residues 1–13 lie on the Extracellular side of the membrane; the sequence is MRAPGAGAASVVS. A helical transmembrane segment spans residues 14–34; it reads LALLWLLGLPWTWSAAAALGV. The Cytoplasmic portion of the chain corresponds to 35-646; it reads YVGSGGWRFL…TRICSGAFAL (612 aa). The tract at residues 191 to 475 is sufficient for oligomerization; sequence EVSGHLGKSL…YVSESATSKK (285 aa). 246–257 is an AMP binding site; it reads YIYTSGTTGLPK.

The protein belongs to the ATP-dependent AMP-binding enzyme family. In terms of assembly, self-associates. May function as a homodimer. Interacts with EPRS1; mediates the translocation of SLC27A1 from the cytoplasm to the plasma membrane thereby increasing the uptake of long-chain fatty acids. Interacts with DGAT2 and this interaction is enhanced in the presence of ZFYVE1. In terms of tissue distribution, highest levels of expression are detected in muscle and adipose tissue small, intermediate levels in small intestine, and barely detectable in liver. Expressed in brain gray matter.

Its subcellular location is the cell membrane. It localises to the endomembrane system. It is found in the cytoplasm. The enzyme catalyses a fatty acid(in) = a fatty acid(out). The catalysed reaction is (9Z)-octadecenoate(out) = (9Z)-octadecenoate(in). It carries out the reaction hexadecanoate(out) = hexadecanoate(in). It catalyses the reaction (9Z,12Z)-octadecadienoate(out) = (9Z,12Z)-octadecadienoate(in). The enzyme catalyses (5Z,8Z,11Z,14Z)-eicosatetraenoate(out) = (5Z,8Z,11Z,14Z)-eicosatetraenoate(in). The catalysed reaction is a long-chain fatty acid + ATP + CoA = a long-chain fatty acyl-CoA + AMP + diphosphate. It carries out the reaction (5Z,8Z,11Z,14Z)-eicosatetraenoate + ATP + CoA = (5Z,8Z,11Z,14Z)-eicosatetraenoyl-CoA + AMP + diphosphate. It catalyses the reaction a very long-chain fatty acid + ATP + CoA = a very long-chain fatty acyl-CoA + AMP + diphosphate. The enzyme catalyses tetracosanoate + ATP + CoA = tetracosanoyl-CoA + AMP + diphosphate. Inhibited by Triacsin C. Its function is as follows. Mediates the import of long-chain fatty acids (LCFA) into the cell by facilitating their transport at the plasma membrane. Also functions as an acyl-CoA ligase catalyzing the ATP-dependent formation of fatty acyl-CoA using LCFA and very-long-chain fatty acids (VLCFA) as substrates, which prevents fatty acid efflux from cells and might drive more fatty acid uptake. May act directly as a bona fide transporter, or alternatively, in a cytoplasmic or membrane-associated multimeric protein complex to trap and draw fatty acids towards accumulation. Plays a pivotal role in regulating available LCFA substrates from exogenous sources in tissues undergoing high levels of beta-oxidation or triglyceride synthesis. May be involved in regulation of cholesterol metabolism. Probably involved in fatty acid transport across the blood barrier. This is Long-chain fatty acid transport protein 1 from Homo sapiens (Human).